The sequence spans 127 residues: Large ribosomal subunit protein bL12 (127 aa).

This sequence belongs to the bacterial ribosomal protein bL12 family. In terms of assembly, homodimer. Part of the ribosomal stalk of the 50S ribosomal subunit. Forms a multimeric L10(L12)X complex, where L10 forms an elongated spine to which 2 to 4 L12 dimers bind in a sequential fashion. Binds GTP-bound translation factors.

Its function is as follows. Forms part of the ribosomal stalk which helps the ribosome interact with GTP-bound translation factors. Is thus essential for accurate translation. This Clavibacter michiganensis subsp. michiganensis (strain NCPPB 382) protein is Large ribosomal subunit protein bL12.